Here is a 454-residue protein sequence, read N- to C-terminus: GTPase Der (454 aa).

EngA-type G domains lie at 3 to 167 (PVIT…GIAE) and 181 to 354 (MKIA…AAAM). Residues 9–16 (GRPNVGKS), 56–60 (DTGGF), 119–122 (NKTE), 187–194 (GRPNVGKS), 234–238 (DTAGL), and 299–302 (NKWD) each bind GTP. The 85-residue stretch at 355 to 439 (AKLPTPRLTR…PLRIQMNTAK (85 aa)) folds into the KH-like domain.

The protein belongs to the TRAFAC class TrmE-Era-EngA-EngB-Septin-like GTPase superfamily. EngA (Der) GTPase family. As to quaternary structure, associates with the 50S ribosomal subunit.

In terms of biological role, GTPase that plays an essential role in the late steps of ribosome biogenesis. The sequence is that of GTPase Der from Polynucleobacter asymbioticus (strain DSM 18221 / CIP 109841 / QLW-P1DMWA-1) (Polynucleobacter necessarius subsp. asymbioticus).